The chain runs to 207 residues: 3-isopropylmalate dehydratase small subunit (207 aa).

This sequence belongs to the LeuD family. LeuD type 1 subfamily. Heterodimer of LeuC and LeuD.

It catalyses the reaction (2R,3S)-3-isopropylmalate = (2S)-2-isopropylmalate. It participates in amino-acid biosynthesis; L-leucine biosynthesis; L-leucine from 3-methyl-2-oxobutanoate: step 2/4. In terms of biological role, catalyzes the isomerization between 2-isopropylmalate and 3-isopropylmalate, via the formation of 2-isopropylmaleate. This chain is 3-isopropylmalate dehydratase small subunit, found in Rhodospirillum rubrum (strain ATCC 11170 / ATH 1.1.1 / DSM 467 / LMG 4362 / NCIMB 8255 / S1).